A 189-amino-acid chain; its full sequence is Interferon alpha-12 (189 aa).

Positions 1–23 (MARLCAFLMTLLVMSYWSTCSLG) are cleaved as a signal peptide. 2 disulfide bridges follow: C24–C122 and C52–C162. N101 carries N-linked (GlcNAc...) asparagine glycosylation.

This sequence belongs to the alpha/beta interferon family.

It is found in the secreted. Its function is as follows. Produced by macrophages, IFN-alpha have antiviral activities. Interferon stimulates the production of two enzymes: a protein kinase and an oligoadenylate synthetase. In Mus musculus (Mouse), this protein is Interferon alpha-12 (Ifna12).